A 132-amino-acid polypeptide reads, in one-letter code: Large ribosomal subunit protein bL19 (132 aa).

It belongs to the bacterial ribosomal protein bL19 family.

In terms of biological role, this protein is located at the 30S-50S ribosomal subunit interface and may play a role in the structure and function of the aminoacyl-tRNA binding site. In Rhodospirillum centenum (strain ATCC 51521 / SW), this protein is Large ribosomal subunit protein bL19.